Consider the following 448-residue polypeptide: Gamete and mating-type specific protein A (448 aa).

The first 19 residues, 1-19, serve as a signal peptide directing secretion; it reads MKLILVLLCLISTLFVVKG. One can recognise an SCP domain in the interval 30–157; the sequence is VSYHNKWRSS…PDKSEVSCSY (128 aa). Asn-55, Asn-98, and Asn-119 each carry an N-linked (GlcNAc...) asparagine glycan. Residues 171 to 242 form a disordered region; that stretch reads PKTTTPAPTT…PTTPAPTSTL (72 aa). The segment covering 178–236 has biased composition (pro residues); the sequence is PTTPAPTTPKPTTPAPTTPKPTTPAPTTPKPTTPAPTTPKPTTPAPTTPKPTTPAPTTP. Active-site residues include Cys-262, His-397, and Asn-415.

It belongs to the peptidase C1 family.

Its subcellular location is the secreted. Its function is as follows. Thiol protease that seems to be involved in the sexual development. In Dictyostelium discoideum (Social amoeba), this protein is Gamete and mating-type specific protein A (gmsA).